A 398-amino-acid polypeptide reads, in one-letter code: S-adenosylmethionine decarboxylase proenzyme (398 aa).

Catalysis depends on residues glutamate 18 and glutamate 21. The active-site Schiff-base intermediate with substrate; via pyruvic acid is the serine 78. Serine 78 bears the Pyruvic acid (Ser); by autocatalysis mark. The active-site Proton donor; for catalytic activity is cysteine 92. Active-site proton acceptor; for processing activity residues include serine 243 and histidine 256.

Belongs to the eukaryotic AdoMetDC family. It depends on pyruvate as a cofactor. Is synthesized initially as an inactive proenzyme. Formation of the active enzyme involves a self-maturation process in which the active site pyruvoyl group is generated from an internal serine residue via an autocatalytic post-translational modification. Two non-identical subunits are generated from the proenzyme in this reaction, and the pyruvate is formed at the N-terminus of the alpha chain, which is derived from the carboxyl end of the proenzyme. The post-translation cleavage follows an unusual pathway, termed non-hydrolytic serinolysis, in which the side chain hydroxyl group of the serine supplies its oxygen atom to form the C-terminus of the beta chain, while the remainder of the serine residue undergoes an oxidative deamination to produce ammonia and the pyruvoyl group blocking the N-terminus of the alpha chain.

It carries out the reaction S-adenosyl-L-methionine + H(+) = S-adenosyl 3-(methylsulfanyl)propylamine + CO2. It participates in amine and polyamine biosynthesis; S-adenosylmethioninamine biosynthesis; S-adenosylmethioninamine from S-adenosyl-L-methionine: step 1/1. The protein is S-adenosylmethionine decarboxylase proenzyme (SAMDC) of Oryza sativa subsp. japonica (Rice).